A 268-amino-acid polypeptide reads, in one-letter code: Phosphatidylglycerol--prolipoprotein diacylglyceryl transferase (268 aa).

Transmembrane regions (helical) follow at residues 23–43, 62–82, 97–117, 132–152, 179–199, 206–226, and 241–261; these read IGLR…RWLA, LLFN…VFFY, VWEG…AMIW, FVAP…FINL, SQLY…NIFI, ASVA…VEYV, and GQAL…WAYS. A 1,2-diacyl-sn-glycero-3-phospho-(1'-sn-glycerol) is bound at residue Arg-145.

The protein belongs to the Lgt family.

Its subcellular location is the cell inner membrane. It catalyses the reaction L-cysteinyl-[prolipoprotein] + a 1,2-diacyl-sn-glycero-3-phospho-(1'-sn-glycerol) = an S-1,2-diacyl-sn-glyceryl-L-cysteinyl-[prolipoprotein] + sn-glycerol 1-phosphate + H(+). It participates in protein modification; lipoprotein biosynthesis (diacylglyceryl transfer). Its function is as follows. Catalyzes the transfer of the diacylglyceryl group from phosphatidylglycerol to the sulfhydryl group of the N-terminal cysteine of a prolipoprotein, the first step in the formation of mature lipoproteins. This chain is Phosphatidylglycerol--prolipoprotein diacylglyceryl transferase, found in Haemophilus influenzae (strain PittEE).